Here is a 314-residue protein sequence, read N- to C-terminus: Ribosomal protein L11 methyltransferase (314 aa).

Positions 166, 187, 209, and 251 each coordinate S-adenosyl-L-methionine.

The protein belongs to the methyltransferase superfamily. PrmA family.

The protein resides in the cytoplasm. It catalyses the reaction L-lysyl-[protein] + 3 S-adenosyl-L-methionine = N(6),N(6),N(6)-trimethyl-L-lysyl-[protein] + 3 S-adenosyl-L-homocysteine + 3 H(+). In terms of biological role, methylates ribosomal protein L11. The protein is Ribosomal protein L11 methyltransferase of Clostridium tetani (strain Massachusetts / E88).